A 319-amino-acid polypeptide reads, in one-letter code: Protein-methionine-sulfoxide reductase catalytic subunit MsrP (319 aa).

Positions methionine 1 to alanine 40 form a signal peptide, tat-type signal. Mo-molybdopterin-binding positions include asparagine 73, tyrosine 76–glutamate 77, cysteine 131, threonine 166, asparagine 218, arginine 223, and asparagine 234–lysine 236.

Belongs to the MsrP family. As to quaternary structure, heterodimer of a catalytic subunit (MsrP) and a heme-binding subunit (MsrQ). It depends on Mo-molybdopterin as a cofactor. Post-translationally, predicted to be exported by the Tat system. The position of the signal peptide cleavage has not been experimentally proven.

The protein resides in the periplasm. The enzyme catalyses L-methionyl-[protein] + a quinone + H2O = L-methionyl-(S)-S-oxide-[protein] + a quinol. The catalysed reaction is L-methionyl-[protein] + a quinone + H2O = L-methionyl-(R)-S-oxide-[protein] + a quinol. Its function is as follows. Part of the MsrPQ system that repairs oxidized periplasmic proteins containing methionine sulfoxide residues (Met-O), using respiratory chain electrons. Thus protects these proteins from oxidative-stress damage caused by reactive species of oxygen and chlorine generated by the host defense mechanisms. MsrPQ is essential for the maintenance of envelope integrity under bleach stress, rescuing a wide series of structurally unrelated periplasmic proteins from methionine oxidation. The catalytic subunit MsrP is non-stereospecific, being able to reduce both (R-) and (S-) diastereoisomers of methionine sulfoxide. This chain is Protein-methionine-sulfoxide reductase catalytic subunit MsrP, found in Pasteurella multocida (strain Pm70).